Consider the following 263-residue polypeptide: Imidazole glycerol phosphate synthase subunit HisF (263 aa).

Residues Asp-11 and Asp-131 contribute to the active site.

Belongs to the HisA/HisF family. Heterodimer of HisH and HisF.

The protein localises to the cytoplasm. It catalyses the reaction 5-[(5-phospho-1-deoxy-D-ribulos-1-ylimino)methylamino]-1-(5-phospho-beta-D-ribosyl)imidazole-4-carboxamide + L-glutamine = D-erythro-1-(imidazol-4-yl)glycerol 3-phosphate + 5-amino-1-(5-phospho-beta-D-ribosyl)imidazole-4-carboxamide + L-glutamate + H(+). It functions in the pathway amino-acid biosynthesis; L-histidine biosynthesis; L-histidine from 5-phospho-alpha-D-ribose 1-diphosphate: step 5/9. In terms of biological role, IGPS catalyzes the conversion of PRFAR and glutamine to IGP, AICAR and glutamate. The HisF subunit catalyzes the cyclization activity that produces IGP and AICAR from PRFAR using the ammonia provided by the HisH subunit. This chain is Imidazole glycerol phosphate synthase subunit HisF, found in Deinococcus geothermalis (strain DSM 11300 / CIP 105573 / AG-3a).